The sequence spans 251 residues: Uridylate kinase (251 aa).

Residue 11 to 14 participates in ATP binding; the sequence is KLSG. An involved in allosteric activation by GTP region spans residues 19-24; sequence GNQGFG. Glycine 53 lines the UMP pocket. ATP is bound by residues glycine 54 and arginine 58. Residues aspartate 73 and 134 to 141 each bind UMP; that span reads TGNPYFTT. The ATP site is built by threonine 161, tyrosine 167, and aspartate 170.

It belongs to the UMP kinase family. Homohexamer.

Its subcellular location is the cytoplasm. The enzyme catalyses UMP + ATP = UDP + ADP. It participates in pyrimidine metabolism; CTP biosynthesis via de novo pathway; UDP from UMP (UMPK route): step 1/1. Allosterically activated by GTP. Inhibited by UTP. Its function is as follows. Catalyzes the reversible phosphorylation of UMP to UDP. In Protochlamydia amoebophila (strain UWE25), this protein is Uridylate kinase.